A 249-amino-acid chain; its full sequence is Triosephosphate isomerase (249 aa).

Residue 9 to 11 participates in substrate binding; that stretch reads NWK. The Electrophile role is filled by His-94. Residue Glu-166 is the Proton acceptor of the active site. Substrate is bound by residues Gly-172, Ser-212, and 233–234; that span reads GG.

It belongs to the triosephosphate isomerase family. As to quaternary structure, homodimer.

Its subcellular location is the cytoplasm. The catalysed reaction is D-glyceraldehyde 3-phosphate = dihydroxyacetone phosphate. The protein operates within carbohydrate biosynthesis; gluconeogenesis. It participates in carbohydrate degradation; glycolysis; D-glyceraldehyde 3-phosphate from glycerone phosphate: step 1/1. Involved in the gluconeogenesis. Catalyzes stereospecifically the conversion of dihydroxyacetone phosphate (DHAP) to D-glyceraldehyde-3-phosphate (G3P). The protein is Triosephosphate isomerase of Treponema pallidum (strain Nichols).